The chain runs to 735 residues: Urea active transporter (735 aa).

The Cytoplasmic segment spans residues 1 to 14 (MGEFKPPLPQGAGY). Residues 15 to 35 (AIVLGLGAVFAGMMVLTTYLL) traverse the membrane as a helical segment. The Extracellular segment spans residues 36-85 (KRYQKEIITAEEFTTAGRSVKTGLVAAAVVSSWIWCSTLLTSSTKEYADG). A helical membrane pass occupies residues 86 to 106 (IFGGYAYAAGACFQIIAFAIL). Residues 107–130 (AIKTKQMAPNAHTYLELVRTRYGK) lie on the Cytoplasmic side of the membrane. The chain crosses the membrane as a helical span at residues 131 to 151 (IGHGCYLFYAIATNILVTSML). The Extracellular portion of the chain corresponds to 152 to 166 (LTSGSAVFSDLTGMN). The helical transmembrane segment at 167–187 (TIASCFLLPVGVVVYTLFGGI) threads the bilayer. Residues 188 to 189 (KA) are Cytoplasmic-facing. Residues 190-210 (TFLTDYMHTCVIIIIVLVFAF) traverse the membrane as a helical segment. The Extracellular segment spans residues 211–253 (KVYATSDVLGSPGKVYDLVREAAKRHPVDGNYQGEYMTMTSKS). A helical transmembrane segment spans residues 254–274 (AGILLIINLIGNFGTVFLDNG). The Cytoplasmic portion of the chain corresponds to 275–295 (YWNKAISASPAASLKAYAIGG). The chain crosses the membrane as a helical span at residues 296-316 (LAWFAVPSLISLTMGLACLAV). Residues 317-343 (ETSPNFPTYPDPLTSFQANSGLVLPAA) lie on the Extracellular side of the membrane. Residues 344-364 (AIAIMGKGGAVASLLMIFMAV) traverse the membrane as a helical segment. The Cytoplasmic portion of the chain corresponds to 365–403 (TSAMSAELIAVSSVFTYDIYREYIDPRASGKKLIYTSHV). The chain crosses the membrane as a helical span at residues 404-424 (ACIFFGLAMSGFSVGLYYGGI). Position 425 (Ser425) is a topological domain, extracellular. A helical transmembrane segment spans residues 426-446 (MGYIYEMMGIIISSAVLPVVL). The Cytoplasmic segment spans residues 447–454 (TLCSKDMN). The helical transmembrane segment at 455-475 (LVAAVVSPILGTGLAIMSWLV) threads the bilayer. The Extracellular portion of the chain corresponds to 476–496 (CTKSLYKELTVDTTFMDYPML). Residues 497–517 (TGNLVALLSPAIFIPILTYVF) traverse the membrane as a helical segment. Over 518–618 (KPQNFDWEKM…EQRELARGLK (101 aa)) the chain is Cytoplasmic. The segment at 553–572 (ANDKEQEEETNSLVSDSEKN) is disordered. The chain crosses the membrane as a helical span at residues 619–639 (IAYFLCVFFALAFLVVWPMPM). Topologically, residues 640–650 (YGSKYIFSKKF) are extracellular. The helical transmembrane segment at 651-671 (FTGWVVVMIIWLFFSAFAVCI) threads the bilayer. Over 672–735 (YPLWEGRHGI…SHFGQVDEII (64 aa)) the chain is Cytoplasmic.

This sequence belongs to the sodium:solute symporter (SSF) (TC 2.A.21) family. May polymerize.

It localises to the membrane. Required for active transport of urea. This chain is Urea active transporter (DUR3), found in Saccharomyces cerevisiae (strain ATCC 204508 / S288c) (Baker's yeast).